A 426-amino-acid chain; its full sequence is Histidine--tRNA ligase (426 aa).

It belongs to the class-II aminoacyl-tRNA synthetase family. As to quaternary structure, homodimer.

The protein resides in the cytoplasm. The catalysed reaction is tRNA(His) + L-histidine + ATP = L-histidyl-tRNA(His) + AMP + diphosphate + H(+). The chain is Histidine--tRNA ligase from Microcystis aeruginosa (strain NIES-843 / IAM M-2473).